We begin with the raw amino-acid sequence, 78 residues long: UPF0270 protein PC1_3850 (78 aa).

This sequence belongs to the UPF0270 family.

The sequence is that of UPF0270 protein PC1_3850 from Pectobacterium carotovorum subsp. carotovorum (strain PC1).